Reading from the N-terminus, the 73-residue chain is Large ribosomal subunit protein bL31 (73 aa).

It belongs to the bacterial ribosomal protein bL31 family. Type A subfamily. In terms of assembly, part of the 50S ribosomal subunit.

Binds the 23S rRNA. This Rhodospirillum centenum (strain ATCC 51521 / SW) protein is Large ribosomal subunit protein bL31.